The following is a 930-amino-acid chain: Urea transporter 2 (930 aa).

The segment covering 1-11 has biased composition (basic and acidic residues); that stretch reads MSDHHPLKEMS. Residues 1-90 are disordered; that stretch reads MSDHHPLKEM…KRRESEVSRR (90 aa). Low complexity-rich tracts occupy residues 12-25 and 32-43; these read DSNS…PLSS and SELSSPTWPSSS. Residues 56-89 are compositionally biased toward basic and acidic residues; it reads PEEKDLRSSDEDSHIVKIEKPNERNKRRESEVSR. 8 helical membrane passes run 145-165, 185-205, 213-233, 242-262, 280-300, 311-331, 350-372, and 401-421; these read ISGL…TIAG, AIAS…MAVF, WWLL…SSAL, LPVF…ATGH, NITW…VGVG, GGVI…HAAI, IYLG…MFYA, and VVGV…FLLL. The segment at 452–479 is disordered; sequence SEEEKSPNGGSGEQSHGSGQWKAEESSE. At Ser-487 the chain carries Phosphoserine. A run of 4 helical transmembrane segments spans residues 610–630, 648–668, 676–696, and 705–725; these read GILI…SGCL, AIAA…MAVF, WWLL…SSAL, and LPVF…ATGH. An N-linked (GlcNAc...) asparagine glycan is attached at Asn-743. The next 4 membrane-spanning stretches (helical) occupy residues 774-794, 813-833, 842-862, and 864-884; these read GGIF…HAAI, IYFG…GGMF, LLAI…ANML, and VFGL…FLLL.

The protein belongs to the urea transporter family. Highly expressed in kidney medulla (at protein level). Also detected in testes, heart, brain and liver (at protein level). In the kidney, present in thin descending limbs of the loop of Henle and in the middle and terminal inner medullary collecting ducts. In terms of tissue distribution, expressed in the kidney medulla. As to expression, expressed in the peritubular myoid cells forming the outermost layer of the seminiferous tubules within the testes and is not detected in kidney. Expression levels are coordinated with the stage of testes development and increase 15 days postpartum, commensurate with the start of seminiferous tubule fluid movement.

It is found in the apical cell membrane. It localises to the basolateral cell membrane. The catalysed reaction is urea(in) = urea(out). Its activity is regulated as follows. Inhibited by phloretin. Activated by forskolin, 3-isobutyl-1-methylxanthine (IBMX) and cAMP. Inhibited by phloretin. With respect to regulation, inhibited by phloretin. Activated by forskolin, 3-isobutyl-1-methylxanthine (IBMX) and cAMP. Functionally, mediates the transport of urea driven by a concentration gradient across the cell membrane of the renal inner medullary collecting duct which is critical to the urinary concentrating mechanism. Its function is as follows. Mediates the transport of urea driven by a concentration gradient across the cell membrane. Implicated in the urea movement across the blood-testis barrier and does not translocate water. The protein is Urea transporter 2 (Slc14a2) of Mus musculus (Mouse).